The chain runs to 249 residues: Tetrahydromethanopterin S-methyltransferase subunit A (249 aa).

The Cytoplasmic segment spans residues 2-225 (PEKAEPAEGW…YMAGYLSGRT (224 aa)). Histidine 88 serves as a coordination point for 5-hydroxybenzimidazolylcob(I)amide. Residues 226–246 (MGLLIGIISGMIFLFLPMVVL) traverse the membrane as a helical segment. The Extracellular segment spans residues 247-249 (GGV).

It belongs to the MtrA family. As to quaternary structure, the complex is composed of 8 subunits; MtrA, MtrB, MtrC, MtrD, MtrE, MtrF, MtrG and MtrH. It depends on 5-hydroxybenzimidazolylcob(I)amide as a cofactor.

The protein localises to the cell membrane. It carries out the reaction 5-methyl-5,6,7,8-tetrahydromethanopterin + coenzyme M + 2 Na(+)(in) = 5,6,7,8-tetrahydromethanopterin + methyl-coenzyme M + 2 Na(+)(out). It participates in one-carbon metabolism; methanogenesis from CO(2); methyl-coenzyme M from 5,10-methylene-5,6,7,8-tetrahydromethanopterin: step 2/2. Its function is as follows. Part of a complex that catalyzes the formation of methyl-coenzyme M and tetrahydromethanopterin from coenzyme M and methyl-tetrahydromethanopterin. This is an energy-conserving, sodium-ion translocating step. The protein is Tetrahydromethanopterin S-methyltransferase subunit A of Methanopyrus kandleri (strain AV19 / DSM 6324 / JCM 9639 / NBRC 100938).